Consider the following 116-residue polypeptide: Cocaine- and amphetamine-regulated transcript protein (116 aa).

The first 27 residues, 1–27 (MESPRLRLLPLLGAALLLLLPLLGALA), serve as a signal peptide directing secretion. Position 41 is a phosphotyrosine (Y41). S48 carries the phosphoserine modification. 3 disulfide bridges follow: C82/C100, C88/C108, and C102/C115.

The protein belongs to the CART family.

It is found in the secreted. Functionally, satiety factor closely associated with the actions of leptin and neuropeptide y; this anorectic peptide inhibits both normal and starvation-induced feeding and completely blocks the feeding response induced by neuropeptide Y and regulated by leptin in the hypothalamus. The sequence is that of Cocaine- and amphetamine-regulated transcript protein (CARTPT) from Bos taurus (Bovine).